The following is a 180-amino-acid chain: tRNA (cytidine(56)-2'-O)-methyltransferase (180 aa).

S-adenosyl-L-methionine is bound by residues Leu85, 114–118 (GAEKV), and 132–139 (VGNQPHSE).

Belongs to the aTrm56 family. In terms of assembly, homodimer.

Its subcellular location is the cytoplasm. The enzyme catalyses cytidine(56) in tRNA + S-adenosyl-L-methionine = 2'-O-methylcytidine(56) in tRNA + S-adenosyl-L-homocysteine + H(+). Its function is as follows. Specifically catalyzes the AdoMet-dependent 2'-O-ribose methylation of cytidine at position 56 in tRNAs. In Thermococcus kodakarensis (strain ATCC BAA-918 / JCM 12380 / KOD1) (Pyrococcus kodakaraensis (strain KOD1)), this protein is tRNA (cytidine(56)-2'-O)-methyltransferase.